Consider the following 216-residue polypeptide: uncharacterized protein (216 aa).

Residues 7 to 29 (ILVIFFLIFFIGFEFSDMTLAFI) traverse the membrane as a helical segment.

The protein resides in the membrane. This is an uncharacterized protein from Archaeoglobus fulgidus (strain ATCC 49558 / DSM 4304 / JCM 9628 / NBRC 100126 / VC-16).